We begin with the raw amino-acid sequence, 441 residues long: Polycomb protein EED (441 aa).

The interval M1–K72 is disordered. Position 2 is an N-acetylserine (S2). 2 positions are modified to phosphoserine: S2 and S34. Over residues E45–N61 the composition is skewed to polar residues. T55 is subject to Phosphothreonine. K66 carries the post-translational modification N6,N6,N6-trimethyllysine; alternate. At K66 the chain carries N6,N6-dimethyllysine; alternate. Residue K66 is modified to N6-methyllysine; alternate. The interval S81–R441 is interaction with EZH2. WD repeat units follow at residues D91 to L134, D142 to H185, G188 to I228, and G234 to K275. 2 required for interaction with the matrix protein MA of HIV-1 regions span residues T149 to D303 and T301 to R441. Residues K197, K268, and K284 each carry the N6,N6,N6-trimethyllysine; alternate modification. 3 positions are modified to N6,N6-dimethyllysine; alternate: K197, K268, and K284. N6-methyllysine; alternate is present on residues K197, K268, and K284. WD repeat units follow at residues I304 to D341, S359 to A399, and K408 to R441.

Belongs to the WD repeat ESC family. As to quaternary structure, component of the PRC2/EED-EZH2 complex, which includes EED, EZH2, SUZ12, RBBP4 and RBBP7 and possibly AEBP2. The minimum components required for methyltransferase activity of the PRC2/EED-EZH2 complex are EED, EZH2 and SUZ12. Component of the PRC2/EED-EZH1 complex, which includes EED, EZH1, SUZ12, RBBP4 and AEBP2. The PRC2 complex may also interact with DNMT1, DNMT3A, DNMT3B and PHF1 via the EZH2 subunit and with SIRT1 via the SUZ12 subunit. Interacts with HDAC, HDAC2, histone H1 and YY1. May interact with ITGA4, ITGAE and ITGB7. Interacts with CDYL. Interacts with BMAL1. Interacts with KMT2A/MLL1. In terms of assembly, (Microbial infection) May interact with the MA protein of HIV-1. In terms of processing, methylated. Binding to histone H1 'Lys-26' promotes mono-, di-, and trimethylation of internal lysines. Expressed in brain, colon, heart, kidney, liver, lung, muscle, ovary, peripheral blood leukocytes, pancreas, placenta, prostate, spleen, small intestine, testis, thymus and uterus. Appears to be overexpressed in breast and colon cancer.

The protein localises to the nucleus. It is found in the chromosome. Polycomb group (PcG) protein. Component of the PRC2/EED-EZH2 complex, which methylates 'Lys-9' and 'Lys-27' of histone H3, leading to transcriptional repression of the affected target gene. Also recognizes 'Lys-26' trimethylated histone H1 with the effect of inhibiting PRC2 complex methyltransferase activity on nucleosomal histone H3 'Lys-27', whereas H3 'Lys-27' recognition has the opposite effect, enabling the propagation of this repressive mark. The PRC2/EED-EZH2 complex may also serve as a recruiting platform for DNA methyltransferases, thereby linking two epigenetic repression systems. Genes repressed by the PRC2/EED-EZH2 complex include HOXC8, HOXA9, MYT1 and CDKN2A. The sequence is that of Polycomb protein EED from Homo sapiens (Human).